Consider the following 206-residue polypeptide: Large ribosomal subunit protein uL4 (206 aa).

The tract at residues 63–94 (MYKQKGTGRARHHSARAPQFRGGGKAHGPVVR) is disordered. Residues 64 to 77 (YKQKGTGRARHHSA) show a composition bias toward basic residues.

It belongs to the universal ribosomal protein uL4 family. In terms of assembly, part of the 50S ribosomal subunit.

Functionally, one of the primary rRNA binding proteins, this protein initially binds near the 5'-end of the 23S rRNA. It is important during the early stages of 50S assembly. It makes multiple contacts with different domains of the 23S rRNA in the assembled 50S subunit and ribosome. Forms part of the polypeptide exit tunnel. In Mesorhizobium japonicum (strain LMG 29417 / CECT 9101 / MAFF 303099) (Mesorhizobium loti (strain MAFF 303099)), this protein is Large ribosomal subunit protein uL4.